A 260-amino-acid polypeptide reads, in one-letter code: 4-hydroxy-tetrahydrodipicolinate reductase (260 aa).

NAD(+)-binding positions include 8 to 13, Glu35, 91 to 93, and 115 to 118; these read GAAGRM, GTT, and APNM. Catalysis depends on His148, which acts as the Proton donor/acceptor. His149 serves as a coordination point for (S)-2,3,4,5-tetrahydrodipicolinate. Lys152 functions as the Proton donor in the catalytic mechanism. 158–159 is a (S)-2,3,4,5-tetrahydrodipicolinate binding site; that stretch reads GT.

This sequence belongs to the DapB family.

It localises to the cytoplasm. The catalysed reaction is (S)-2,3,4,5-tetrahydrodipicolinate + NAD(+) + H2O = (2S,4S)-4-hydroxy-2,3,4,5-tetrahydrodipicolinate + NADH + H(+). The enzyme catalyses (S)-2,3,4,5-tetrahydrodipicolinate + NADP(+) + H2O = (2S,4S)-4-hydroxy-2,3,4,5-tetrahydrodipicolinate + NADPH + H(+). Its pathway is amino-acid biosynthesis; L-lysine biosynthesis via DAP pathway; (S)-tetrahydrodipicolinate from L-aspartate: step 4/4. Functionally, catalyzes the conversion of 4-hydroxy-tetrahydrodipicolinate (HTPA) to tetrahydrodipicolinate. This is 4-hydroxy-tetrahydrodipicolinate reductase from Rubrobacter xylanophilus (strain DSM 9941 / JCM 11954 / NBRC 16129 / PRD-1).